A 511-amino-acid chain; its full sequence is Chromosomal replication initiator protein DnaA (511 aa).

The tract at residues 1–90 is domain I, interacts with DnaA modulators; the sequence is MSVELWQQCV…RRSSAPRAAP (90 aa). The tract at residues 91-174 is domain II; the sequence is NAPVSAAMAA…QVEGALKHTS (84 aa). The segment at 125–161 is disordered; the sequence is TAEPAQASDMAEASSRDSYDSMADSAPAPVAPGRTEQ. Residues 175–391 are domain III, AAA+ region; sequence YLNRTFTFET…GALKRVIAHS (217 aa). ATP-binding residues include Gly219, Gly221, Lys222, and Thr223. A domain IV, binds dsDNA region spans residues 392–511; the sequence is HFMGRDITIE…YKNLLRTLTT (120 aa).

Belongs to the DnaA family. In terms of assembly, oligomerizes as a right-handed, spiral filament on DNA at oriC.

It localises to the cytoplasm. Its function is as follows. Plays an essential role in the initiation and regulation of chromosomal replication. ATP-DnaA binds to the origin of replication (oriC) to initiate formation of the DNA replication initiation complex once per cell cycle. Binds the DnaA box (a 9 base pair repeat at the origin) and separates the double-stranded (ds)DNA. Forms a right-handed helical filament on oriC DNA; dsDNA binds to the exterior of the filament while single-stranded (ss)DNA is stabiized in the filament's interior. The ATP-DnaA-oriC complex binds and stabilizes one strand of the AT-rich DNA unwinding element (DUE), permitting loading of DNA polymerase. After initiation quickly degrades to an ADP-DnaA complex that is not apt for DNA replication. Binds acidic phospholipids. The chain is Chromosomal replication initiator protein DnaA from Pseudomonas putida (strain W619).